We begin with the raw amino-acid sequence, 317 residues long: Lipoyl synthase (317 aa).

Positions 55, 60, 66, 81, 85, 88, and 292 each coordinate [4Fe-4S] cluster. Residues 67-281 (WEDREATFLI…ERYATEIGFA (215 aa)) enclose the Radical SAM core domain.

Belongs to the radical SAM superfamily. Lipoyl synthase family. Requires [4Fe-4S] cluster as cofactor.

Its subcellular location is the cytoplasm. The enzyme catalyses [[Fe-S] cluster scaffold protein carrying a second [4Fe-4S](2+) cluster] + N(6)-octanoyl-L-lysyl-[protein] + 2 oxidized [2Fe-2S]-[ferredoxin] + 2 S-adenosyl-L-methionine + 4 H(+) = [[Fe-S] cluster scaffold protein] + N(6)-[(R)-dihydrolipoyl]-L-lysyl-[protein] + 4 Fe(3+) + 2 hydrogen sulfide + 2 5'-deoxyadenosine + 2 L-methionine + 2 reduced [2Fe-2S]-[ferredoxin]. It functions in the pathway protein modification; protein lipoylation via endogenous pathway; protein N(6)-(lipoyl)lysine from octanoyl-[acyl-carrier-protein]: step 2/2. In terms of biological role, catalyzes the radical-mediated insertion of two sulfur atoms into the C-6 and C-8 positions of the octanoyl moiety bound to the lipoyl domains of lipoate-dependent enzymes, thereby converting the octanoylated domains into lipoylated derivatives. The polypeptide is Lipoyl synthase (Mycolicibacterium gilvum (strain PYR-GCK) (Mycobacterium gilvum (strain PYR-GCK))).